A 237-amino-acid chain; its full sequence is Ribonuclease PH (237 aa).

Phosphate is bound by residues Arg86 and 124–126 (GTR).

It belongs to the RNase PH family. Homohexameric ring arranged as a trimer of dimers.

It catalyses the reaction tRNA(n+1) + phosphate = tRNA(n) + a ribonucleoside 5'-diphosphate. Functionally, phosphorolytic 3'-5' exoribonuclease that plays an important role in tRNA 3'-end maturation. Removes nucleotide residues following the 3'-CCA terminus of tRNAs; can also add nucleotides to the ends of RNA molecules by using nucleoside diphosphates as substrates, but this may not be physiologically important. Probably plays a role in initiation of 16S rRNA degradation (leading to ribosome degradation) during starvation. In Shewanella woodyi (strain ATCC 51908 / MS32), this protein is Ribonuclease PH.